The sequence spans 839 residues: Protein translocase subunit SecA (839 aa).

Residues Gln85, 103–107, and Asp493 contribute to the ATP site; that span reads GEGKT. The segment covering 780–790 has biased composition (basic and acidic residues); the sequence is QIHEQERERAS. The interval 780–839 is disordered; sequence QIHEQERERASQRATTAAPQNIQSQQSANTDDLPKVERNEACPCGSGKKFKNCHGRKSFS. The span at 791 to 809 shows a compositional bias: polar residues; the sequence is QRATTAAPQNIQSQQSANT. Zn(2+)-binding residues include Cys821, Cys823, Cys832, and His833. Residues 827 to 839 show a composition bias toward basic residues; it reads KKFKNCHGRKSFS.

Belongs to the SecA family. In terms of assembly, monomer and homodimer. Part of the essential Sec protein translocation apparatus which comprises SecA, SecYEG and auxiliary proteins SecDF. Other proteins may also be involved. Zn(2+) serves as cofactor.

Its subcellular location is the cell membrane. The protein resides in the cytoplasm. The catalysed reaction is ATP + H2O + cellular proteinSide 1 = ADP + phosphate + cellular proteinSide 2.. Its function is as follows. Part of the Sec protein translocase complex. Interacts with the SecYEG preprotein conducting channel. Has a central role in coupling the hydrolysis of ATP to the transfer of proteins into and across the cell membrane, serving as an ATP-driven molecular motor driving the stepwise translocation of polypeptide chains across the membrane. The polypeptide is Protein translocase subunit SecA (Streptococcus pyogenes serotype M28 (strain MGAS6180)).